The primary structure comprises 342 residues: tRNA N6-adenosine threonylcarbamoyltransferase (342 aa).

His119 and His123 together coordinate Fe cation. Substrate contacts are provided by residues 142-146 (VVSGG), Asp175, Gly188, and Asn282. Asp310 contributes to the Fe cation binding site.

It belongs to the KAE1 / TsaD family. Fe(2+) serves as cofactor.

It localises to the cytoplasm. It catalyses the reaction L-threonylcarbamoyladenylate + adenosine(37) in tRNA = N(6)-L-threonylcarbamoyladenosine(37) in tRNA + AMP + H(+). Functionally, required for the formation of a threonylcarbamoyl group on adenosine at position 37 (t(6)A37) in tRNAs that read codons beginning with adenine. Is involved in the transfer of the threonylcarbamoyl moiety of threonylcarbamoyl-AMP (TC-AMP) to the N6 group of A37, together with TsaE and TsaB. TsaD likely plays a direct catalytic role in this reaction. The polypeptide is tRNA N6-adenosine threonylcarbamoyltransferase (Moorella thermoacetica (strain ATCC 39073 / JCM 9320)).